A 1263-amino-acid polypeptide reads, in one-letter code: Kinesin-like protein KIN-12E (1263 aa).

Positions 21–44 (PAPSESLRSVPCTPEANTVSRDNH) are disordered. Positions 35 to 44 (EANTVSRDNH) are enriched in polar residues. In terms of domain architecture, Kinesin motor spans 93–430 (NVQVIIRTRP…LKFAQRAKLI (338 aa)). Residue 174–181 (GQTGSGKT) participates in ATP binding. 6 coiled-coil regions span residues 679-737 (SKKL…KIRS), 764-805 (AEAH…AEEN), 831-881 (ALEV…KRLL), 905-966 (SEKS…HQSE), 1091-1168 (TDLL…TIQE), and 1193-1251 (LRKE…VLSL).

Belongs to the TRAFAC class myosin-kinesin ATPase superfamily. Kinesin family. KIN-12 subfamily.

This chain is Kinesin-like protein KIN-12E, found in Arabidopsis thaliana (Mouse-ear cress).